We begin with the raw amino-acid sequence, 380 residues long: MSNKPLRIGIVAGELSGDTLGEGFIKAIKAVHPDAEFVGIGGPKMIALGCQSLFDMEELAVMGLVEVLGRLPRLLKVKAELVRYFTENPPDVFVGIDAPDFNLRLELDLKNAGIKTVHYVSPSVWAWRQKRIFKIAKATHLVLAFLPFEKAFYDKFNVPCEFIGHTLADAIPLESDKAPARELLGLEQDKQWLAVLPGSRGSELKMLSQPFIETCKKLQQAFPELGFVVALVNQKRREQFEQAWKEYAPELDFKLVDDTARNVITASDAVMLASGTVALECMLLKRPMVVGYRVNAVTAFLAKRLLKTQYVSLPNILADTELVKEYLQDDCTPDNLFGEVSRLLEGDNHQMLDKFTEMHHWIRKDADQQAANAVLKLIEK.

This sequence belongs to the LpxB family.

It catalyses the reaction a lipid X + a UDP-2-N,3-O-bis[(3R)-3-hydroxyacyl]-alpha-D-glucosamine = a lipid A disaccharide + UDP + H(+). The protein operates within bacterial outer membrane biogenesis; LPS lipid A biosynthesis. Its function is as follows. Condensation of UDP-2,3-diacylglucosamine and 2,3-diacylglucosamine-1-phosphate to form lipid A disaccharide, a precursor of lipid A, a phosphorylated glycolipid that anchors the lipopolysaccharide to the outer membrane of the cell. The chain is Lipid-A-disaccharide synthase from Vibrio vulnificus (strain CMCP6).